The primary structure comprises 877 residues: Translation initiation factor IF-2 (877 aa).

Over residues 66-115 (PKKESTAKKTTKKDEVKKEEKKTTTKKESKNPAKAVSEKKDEVKKEEKQP) the composition is skewed to basic and acidic residues. Disordered regions lie at residues 66–127 (PKKE…LEEK), 187–208 (SDES…SKKE), and 241–290 (ENKP…KESE). The segment covering 192–201 (KRKKKEKKNH) has biased composition (basic residues). Over residues 245–265 (AQPTNKKQPNILKQSLNNSIN) the composition is skewed to polar residues. One can recognise a tr-type G domain in the interval 376-543 (QRAPVITIMG…IVLLQADILE (168 aa)). The G1 stretch occupies residues 385–392 (GHVDHGKT). 385-392 (GHVDHGKT) lines the GTP pocket. Positions 410-414 (GITQH) are G2. A G3 region spans residues 431-434 (DTPG). GTP contacts are provided by residues 431-435 (DTPGH) and 485-488 (NKMD). Residues 485 to 488 (NKMD) form a G4 region. The interval 521–523 (SAK) is G5.

Belongs to the TRAFAC class translation factor GTPase superfamily. Classic translation factor GTPase family. IF-2 subfamily.

The protein localises to the cytoplasm. Functionally, one of the essential components for the initiation of protein synthesis. Protects formylmethionyl-tRNA from spontaneous hydrolysis and promotes its binding to the 30S ribosomal subunits. Also involved in the hydrolysis of GTP during the formation of the 70S ribosomal complex. The sequence is that of Translation initiation factor IF-2 from Campylobacter lari (strain RM2100 / D67 / ATCC BAA-1060).